A 315-amino-acid chain; its full sequence is Protein OPG185 (315 aa).

Positions 1–16 (MTRLPILLLLISLVYA) are cleaved as a signal peptide. One can recognise an Ig-like V-type domain in the interval 17–121 (TPFPQTSKKI…NDTDKVDYEE (105 aa)). Residues 17–279 (TPFPQTSKKI…SNYKTKDFVE (263 aa)) lie on the Virion surface side of the membrane. A disulfide bond links Cys-34 and Cys-103. N-linked (GlcNAc...) asparagine; by host glycosylation is found at Asn-37, Asn-69, Asn-112, and Asn-161. The span at 193–202 (NTVSASSGES) shows a compositional bias: polar residues. The interval 193–213 (NTVSASSGESTTDETPEPITD) is disordered. Asn-254 is a glycosylation site (N-linked (GlcNAc...) asparagine; by host). The helical transmembrane segment at 280–303 (IFGITALIILSAVAIFCITYYIYN) threads the bilayer. Topologically, residues 304–315 (KRSRKYKTENKV) are intravirion.

This sequence belongs to the orthopoxvirus OPG185 family. As to quaternary structure, heterodimerizes with OPG040. The heterodimer OPG185-OPG040 interacts with components of the entry fusion complex OPG143 and OPG094. Heterodimer with C3/VPC protein; disulfide-linked. Glycosylated; contains phosphate and sulfate-substituted glycans. O-glycosylation is required for hemagglutination and hemadsorption activities of infected cell membranes.

Its subcellular location is the virion membrane. It localises to the host membrane. Its function is as follows. Prevents cell to cell fusion by interacting with and directing the viral OPG040 protein on the host plasma membrane. The OPG185-OPG040 complex associates with components of the entry fusion complex (EFC) presumably to avoid superinfection and syncytium formation. Via its interaction with C3/VCP protein, protects the infected cell and probably also the extracellular enveloped virus from complement attack. The chain is Protein OPG185 (OPG185) from Homo sapiens (Human).